The chain runs to 62 residues: DNA gyrase inhibitor YacG (62 aa).

4 residues coordinate Zn(2+): Cys9, Cys12, Cys27, and Cys31. Over residues 43-53 (GYRIPGEKAPE) the composition is skewed to basic and acidic residues. Residues 43–62 (GYRIPGEKAPESGDEEPGDE) form a disordered region.

This sequence belongs to the DNA gyrase inhibitor YacG family. Interacts with GyrB. The cofactor is Zn(2+).

Its function is as follows. Inhibits all the catalytic activities of DNA gyrase by preventing its interaction with DNA. Acts by binding directly to the C-terminal domain of GyrB, which probably disrupts DNA binding by the gyrase. The polypeptide is DNA gyrase inhibitor YacG (Citrifermentans bemidjiense (strain ATCC BAA-1014 / DSM 16622 / JCM 12645 / Bem) (Geobacter bemidjiensis)).